Here is a 130-residue protein sequence, read N- to C-terminus: Small ribosomal subunit protein uS11 (130 aa).

The protein belongs to the universal ribosomal protein uS11 family. As to quaternary structure, part of the 30S ribosomal subunit. Interacts with proteins S7 and S18. Binds to IF-3.

Located on the platform of the 30S subunit, it bridges several disparate RNA helices of the 16S rRNA. Forms part of the Shine-Dalgarno cleft in the 70S ribosome. The protein is Small ribosomal subunit protein uS11 of Gluconacetobacter diazotrophicus (strain ATCC 49037 / DSM 5601 / CCUG 37298 / CIP 103539 / LMG 7603 / PAl5).